The chain runs to 330 residues: Small ribosomal subunit protein uS15m (330 aa).

This sequence belongs to the universal ribosomal protein uS15 family. As to quaternary structure, component of the mitochondrial ribosome small subunit (28S) which comprises a 12S rRNA and about 30 distinct proteins.

The protein resides in the mitochondrion. The protein is Small ribosomal subunit protein uS15m (mrps-15) of Caenorhabditis elegans.